The primary structure comprises 376 residues: Protein FAM199X (376 aa).

Residues 237–253 show a composition bias toward basic and acidic residues; that stretch reads YIKEHSPRQRSTRESWK. A disordered region spans residues 237–350; sequence YIKEHSPRQR…QRQARKERLS (114 aa). Positions 255 to 300 are enriched in low complexity; the sequence is TSYSTASTSGVSGASVSSSSASMVSTASSTGSSGGNSASNSSANMS. Positions 318–337 are enriched in basic residues; the sequence is DSKKRSKQRKLQQKALRKRQ. Residues 320–349 adopt a coiled-coil conformation; the sequence is KKRSKQRKLQQKALRKRQLKEQRQARKERL. Basic and acidic residues predominate over residues 338-349; sequence LKEQRQARKERL.

Belongs to the FAM199 family.

In Xenopus tropicalis (Western clawed frog), this protein is Protein FAM199X (fam199x).